Consider the following 131-residue polypeptide: Aspartate 1-decarboxylase (131 aa).

The Schiff-base intermediate with substrate; via pyruvic acid role is filled by Ser25. Ser25 carries the post-translational modification Pyruvic acid (Ser). Thr57 is a binding site for substrate. Tyr58 serves as the catalytic Proton donor. A substrate-binding site is contributed by 73 to 75; the sequence is GAA.

This sequence belongs to the PanD family. Heterooctamer of four alpha and four beta subunits. Pyruvate serves as cofactor. Post-translationally, is synthesized initially as an inactive proenzyme, which is activated by self-cleavage at a specific serine bond to produce a beta-subunit with a hydroxyl group at its C-terminus and an alpha-subunit with a pyruvoyl group at its N-terminus.

It is found in the cytoplasm. The catalysed reaction is L-aspartate + H(+) = beta-alanine + CO2. Its pathway is cofactor biosynthesis; (R)-pantothenate biosynthesis; beta-alanine from L-aspartate: step 1/1. Its function is as follows. Catalyzes the pyruvoyl-dependent decarboxylation of aspartate to produce beta-alanine. In Chlorobium phaeobacteroides (strain DSM 266 / SMG 266 / 2430), this protein is Aspartate 1-decarboxylase.